We begin with the raw amino-acid sequence, 292 residues long: Rab effector Noc2 (292 aa).

Residues glutamine 41–glycine 158 form the RabBD domain. Residues glycine 89–glutamate 146 form an FYVE-type zinc finger. Zn(2+) is bound by residues cysteine 95, cysteine 98, cysteine 112, cysteine 115, cysteine 120, cysteine 123, cysteine 138, and cysteine 141. Residues proline 175–arginine 292 form a disordered region. Residues leucine 221–glycine 235 show a composition bias toward basic and acidic residues. Serine 248 carries the post-translational modification Phosphoserine. The segment covering alanine 257–serine 269 has biased composition (low complexity).

In terms of assembly, recruited to dense-core vesicles through specific interaction with RAB27A in endocrine cells. Interacts with RAB3A, RAB3B, RAB3C and RAB3D. Interacts with ZYX.

It is found in the cytoplasm. The protein resides in the cytoplasmic vesicle. Its subcellular location is the secretory vesicle membrane. Functionally, rab GTPase effector involved in the late steps of regulated exocytosis, both in endocrine and exocrine cells. In Bos taurus (Bovine), this protein is Rab effector Noc2 (RPH3AL).